The following is a 553-amino-acid chain: Glutamyl-tRNA(Gln) amidotransferase subunit B, mitochondrial (553 aa).

The N-terminal 18 residues, 1–18 (MAASTSGYSGVLFRLRKY), are a transit peptide targeting the mitochondrion.

The protein belongs to the GatB/GatE family. GatB subfamily. Subunit of the heterotrimeric GatCAB amidotransferase (AdT) complex, composed of A (qrsl1), B (gatb) and C (gatc) subunits.

The protein resides in the mitochondrion. The enzyme catalyses L-glutamyl-tRNA(Gln) + L-glutamine + ATP + H2O = L-glutaminyl-tRNA(Gln) + L-glutamate + ADP + phosphate + H(+). In terms of biological role, allows the formation of correctly charged Gln-tRNA(Gln) through the transamidation of misacylated Glu-tRNA(Gln) in the mitochondria. The reaction takes place in the presence of glutamine and ATP through an activated gamma-phospho-Glu-tRNA(Gln). The chain is Glutamyl-tRNA(Gln) amidotransferase subunit B, mitochondrial from Danio rerio (Zebrafish).